A 132-amino-acid chain; its full sequence is DNA-directed RNA polymerase subunit omega (132 aa).

Residues 90–109 (SSEAGGVLGTSSEEEGSSFD) are disordered.

This sequence belongs to the RNA polymerase subunit omega family. As to quaternary structure, the RNAP catalytic core consists of 2 alpha, 1 beta, 1 beta' and 1 omega subunit. When a sigma factor is associated with the core the holoenzyme is formed, which can initiate transcription.

The catalysed reaction is RNA(n) + a ribonucleoside 5'-triphosphate = RNA(n+1) + diphosphate. Its function is as follows. Promotes RNA polymerase assembly. Latches the N- and C-terminal regions of the beta' subunit thereby facilitating its interaction with the beta and alpha subunits. This chain is DNA-directed RNA polymerase subunit omega, found in Bartonella henselae (strain ATCC 49882 / DSM 28221 / CCUG 30454 / Houston 1) (Rochalimaea henselae).